The chain runs to 55 residues: Large ribosomal subunit protein bL33 (55 aa).

It belongs to the bacterial ribosomal protein bL33 family.

The chain is Large ribosomal subunit protein bL33 from Zymomonas mobilis subsp. mobilis (strain ATCC 31821 / ZM4 / CP4).